The following is a 98-amino-acid chain: UPF0235 protein CCNA_03737 (98 aa).

Belongs to the UPF0235 family.

The polypeptide is UPF0235 protein CCNA_03737 (Caulobacter vibrioides (strain NA1000 / CB15N) (Caulobacter crescentus)).